Consider the following 236-residue polypeptide: Octanoyltransferase (236 aa).

A BPL/LPL catalytic domain is found at 36–220; it reads DQVPDTVLLL…HLAAVLGASS (185 aa). Substrate contacts are provided by residues 76-83, 150-152, and 163-165; these read RGGKITWH, AIG, and GFA. Cys181 functions as the Acyl-thioester intermediate in the catalytic mechanism.

This sequence belongs to the LipB family.

Its subcellular location is the cytoplasm. The enzyme catalyses octanoyl-[ACP] + L-lysyl-[protein] = N(6)-octanoyl-L-lysyl-[protein] + holo-[ACP] + H(+). It functions in the pathway protein modification; protein lipoylation via endogenous pathway; protein N(6)-(lipoyl)lysine from octanoyl-[acyl-carrier-protein]: step 1/2. Functionally, catalyzes the transfer of endogenously produced octanoic acid from octanoyl-acyl-carrier-protein onto the lipoyl domains of lipoate-dependent enzymes. Lipoyl-ACP can also act as a substrate although octanoyl-ACP is likely to be the physiological substrate. This Thermobifida fusca (strain YX) protein is Octanoyltransferase.